Reading from the N-terminus, the 411-residue chain is MTDGPIKVNSEIGALKTVLLKRPGKELENLVPDYLDGLLFDDIPYLEVAQKEHDHFAQVLREEGVEVLYLEKLAAESIENPQVRSEFIDDVLAESKKTILGHEEEIKTLFATLSNQELVDKIMSGVRKEEINPKCTHLVEYMDDKYPFYLDPMPNLYFTRDPQASIGHGITINRMFWRARRRESIFIQYIVKHHPRFKDANIPIWLDRDCPFNIEGGDELVLSKDVLAIGVSERTSAQAIEKLARRIFENPQATFKKVVAIEIPTSRTFMHLDTVFTMIDYDKFTMHSAILKAEGNMNIFIIEYDDVNKDIAIKQSSHLKDTLEDVLGIDDIQFIPTGNGDVIDGAREQWNDGSNTLCIRPGVVVTYDRNYVSNDLLRQKGIKVIEISGSELVRGRGGPRCMSQPLFREDI.

Catalysis depends on Cys401, which acts as the Amidino-cysteine intermediate.

This sequence belongs to the arginine deiminase family.

It is found in the cytoplasm. It catalyses the reaction L-arginine + H2O = L-citrulline + NH4(+). Its pathway is amino-acid degradation; L-arginine degradation via ADI pathway; carbamoyl phosphate from L-arginine: step 1/2. The sequence is that of Arginine deiminase from Staphylococcus aureus (strain JH9).